Here is a 111-residue protein sequence, read N- to C-terminus: Cornifelin (111 aa).

The protein belongs to the cornifelin family. In terms of assembly, directly or indirectly cross-linked to CE proteins loricin and involucrin (IVL).

The protein localises to the cytoplasm. Its function is as follows. Part of the insoluble cornified cell envelope (CE) of stratified squamous epithelia. The chain is Cornifelin (Cnfn) from Mus musculus (Mouse).